The following is a 296-amino-acid chain: Splicing factor U2af small subunit A (296 aa).

The C3H1-type 1 zinc-finger motif lies at 12-40; sequence EKDRVNCPFYFKIGACRHGDRCSRLHNRP. Residues 44–146 enclose the RRM domain; the sequence is PTLLLSNMYQ…RPIIADFSPV (103 aa). A C3H1-type 2 zinc finger spans residues 148–175; that stretch reads DFREATCRQYEENNCNRGGYCNFMHVKL. Residues 191-202 are compositionally biased toward basic residues; the sequence is SYRRGSRSRSRS. The disordered stretch occupies residues 191–296; it reads SYRRGSRSRS…EREEKEEGGA (106 aa). Composition is skewed to basic and acidic residues over residues 209–254 and 272–296; these read NKRD…DGSR and EGSEERRARIEQWNREREEKEEGGA.

The protein belongs to the splicing factor SR family. As to quaternary structure, component of the spliceosome. Homo- and heterodimer. Interacts with U2AF35B, RNU1 and SR45.

It localises to the nucleus speckle. Its function is as follows. Necessary for the splicing of pre-mRNA. Probably active at the 3' splice sites. The polypeptide is Splicing factor U2af small subunit A (Arabidopsis thaliana (Mouse-ear cress)).